The sequence spans 214 residues: Pyridoxine/pyridoxamine 5'-phosphate oxidase (214 aa).

Substrate-binding positions include 8-11 (RLSY) and R66. Residues 61-66 (RTVLLR), 76-77 (FT), K83, and Q105 contribute to the FMN site. Positions 123, 127, and 131 each coordinate substrate. The tract at residues 126–146 (SRPRESQLAAHASDPQSAPVS) is disordered. FMN is bound by residues 141–142 (QS) and W187. A substrate-binding site is contributed by 193 to 195 (RMH). FMN is bound at residue R197.

It belongs to the pyridoxamine 5'-phosphate oxidase family. Homodimer. It depends on FMN as a cofactor.

The enzyme catalyses pyridoxamine 5'-phosphate + O2 + H2O = pyridoxal 5'-phosphate + H2O2 + NH4(+). The catalysed reaction is pyridoxine 5'-phosphate + O2 = pyridoxal 5'-phosphate + H2O2. The protein operates within cofactor metabolism; pyridoxal 5'-phosphate salvage; pyridoxal 5'-phosphate from pyridoxamine 5'-phosphate: step 1/1. It participates in cofactor metabolism; pyridoxal 5'-phosphate salvage; pyridoxal 5'-phosphate from pyridoxine 5'-phosphate: step 1/1. Its function is as follows. Catalyzes the oxidation of either pyridoxine 5'-phosphate (PNP) or pyridoxamine 5'-phosphate (PMP) into pyridoxal 5'-phosphate (PLP). The polypeptide is Pyridoxine/pyridoxamine 5'-phosphate oxidase (Deinococcus deserti (strain DSM 17065 / CIP 109153 / LMG 22923 / VCD115)).